A 186-amino-acid chain; its full sequence is Catechol O-methyltransferase (186 aa).

S-adenosyl-L-methionine contacts are provided by residues Val7, Glu29, Ser37, Glu55, Leu56, 82–85 (GASQ), Ser84, and Asp106. Asp106 provides a ligand contact to Mg(2+). Lys109 is a binding site for substrate. Positions 134 and 135 each coordinate Mg(2+). Positions 135 and 164 each coordinate substrate. At Ser182 the chain carries Phosphoserine.

The protein belongs to the class I-like SAM-binding methyltransferase superfamily. Cation-dependent O-methyltransferase family. Requires Mg(2+) as cofactor.

It localises to the cytoplasm. It is found in the cell membrane. The enzyme catalyses a catechol + S-adenosyl-L-methionine = a guaiacol + S-adenosyl-L-homocysteine + H(+). The catalysed reaction is 2-hydroxyestrone + S-adenosyl-L-methionine = 2-hydroxy-3-methoxy-estrone + S-adenosyl-L-homocysteine + H(+). It carries out the reaction 4-hydroxyestrone + S-adenosyl-L-methionine = 4-methoxyestrone + S-adenosyl-L-homocysteine + H(+). It catalyses the reaction 2-hydroxyestrone + S-adenosyl-L-methionine = 2-methoxyestrone + S-adenosyl-L-homocysteine + H(+). The enzyme catalyses 4-hydroxy-17beta-estradiol + S-adenosyl-L-methionine = 4-methoxy-17beta-estradiol + S-adenosyl-L-homocysteine + H(+). The catalysed reaction is 2-hydroxy-17beta-estradiol + S-adenosyl-L-methionine = 2-hydroxy-3-methoxy-17beta-estradiol + S-adenosyl-L-homocysteine + H(+). It carries out the reaction 2-hydroxy-17beta-estradiol + S-adenosyl-L-methionine = 2-methoxy-17beta-estradiol + S-adenosyl-L-homocysteine + H(+). Its function is as follows. Catalyzes the O-methylation, and thereby the inactivation, of catecholamine neurotransmitters and catechol hormones. Also shortens the biological half-lives of certain neuroactive drugs, like L-DOPA, alpha-methyl DOPA and isoproterenol. This chain is Catechol O-methyltransferase (COMT), found in Sus scrofa (Pig).